A 221-amino-acid polypeptide reads, in one-letter code: Vesicle transport v-SNARE 11 (221 aa).

The residue at position 2 (serine 2) is an N-acetylserine. The Cytoplasmic portion of the chain corresponds to 2-198 (SDVFDGYERQ…MTRRMNKNKW (197 aa)). A coiled-coil region spans residues 32–93 (EQKKQKLSEI…FKTEVKRITS (62 aa)). A helical; Anchor for type IV membrane protein membrane pass occupies residues 199–219 (TIGAIIIALIAAIFIILYFKL). Over 220–221 (TK) the chain is Vesicular.

Belongs to the VTI1 family. In terms of assembly, forms SNARE complexes with the t-SNAREs SYP51 and either SYP21 or SYP22 in the PVC, and with a much lower affinity with SYP61 in the TGN. Does not interact with SYP41, SYP42 or VPS45. Binds to EPSIN1. Interacts with SCYL2B. In terms of tissue distribution, expressed in roots, stems, flowers and leaves.

It is found in the golgi apparatus. The protein resides in the trans-Golgi network membrane. Its subcellular location is the prevacuolar compartment membrane. The protein localises to the vacuole membrane. Functions as a v-SNARE responsible for targeting AtELP-containing vesicles from the trans-Golgi network (TGN) to the prevacuolar compartment (PVC) and mediates liposome fusion. May be also involved in retrograde traffic to the cis-Golgi. Promotes the formation of vacuolar membrane 'bulbs'. Necessary to deliver proteins to the lytic vacuole, but seems not involved in storage proteins transport. Required for amyloplast sedimentation in the endodermis during shoot gravitropism, which are thus acting as statoliths. Expression in the endodermis is essential for the shoot gravitropic response, whereas expression in other tissues may be responsible for the correct stem and leaf shape. The chain is Vesicle transport v-SNARE 11 from Arabidopsis thaliana (Mouse-ear cress).